Consider the following 155-residue polypeptide: Ribosome maturation factor RimP (155 aa).

The protein belongs to the RimP family.

It localises to the cytoplasm. Its function is as follows. Required for maturation of 30S ribosomal subunits. This chain is Ribosome maturation factor RimP, found in Exiguobacterium sibiricum (strain DSM 17290 / CCUG 55495 / CIP 109462 / JCM 13490 / 255-15).